The following is a 139-amino-acid chain: Translation initiation factor 2 subunit beta (139 aa).

This sequence belongs to the eIF-2-beta/eIF-5 family. As to quaternary structure, heterotrimer composed of an alpha, a beta and a gamma chain.

EIF-2 functions in the early steps of protein synthesis by forming a ternary complex with GTP and initiator tRNA. In Nanoarchaeum equitans (strain Kin4-M), this protein is Translation initiation factor 2 subunit beta.